The sequence spans 415 residues: Zona pellucida-like domain-containing protein 1 (415 aa).

Positions 1-19 (MEPIWLLLLLAIFTVSVSA) are cleaved as a signal peptide. Residues 20–372 (QFNGYNCDAN…QQFQINSVTS (353 aa)) are Extracellular-facing. The ZP domain maps to 43-320 (YCGVQTITMK…PTCHNRDRRD (278 aa)). Disulfide bonds link Cys-44-Cys-155, Cys-79-Cys-104, Cys-235-Cys-296, and Cys-255-Cys-313. The chain crosses the membrane as a helical span at residues 373-393 (ALISGVVILGATSLSFFIIAL). Residues 394–415 (TLLNRKKQNSLVLCGIRNPVFN) are Cytoplasmic-facing.

In terms of processing, proteolytically cleaved before the transmembrane segment to yield the secreted form found in the extracellular matrix of the cupula.

The protein resides in the cytoplasmic vesicle membrane. It localises to the secreted. Its subcellular location is the extracellular space. The protein localises to the extracellular matrix. Functionally, glycoprotein which is a component of the gelatinous extracellular matrix in the cupulae of the vestibular organ. The chain is Zona pellucida-like domain-containing protein 1 (zpld1) from Xenopus laevis (African clawed frog).